A 218-amino-acid chain; its full sequence is 3,4-dihydroxy-2-butanone 4-phosphate synthase (218 aa).

D-ribulose 5-phosphate contacts are provided by residues 37 to 38 (RE), Asp-42, 150 to 154 (RSGHT), and Glu-174. Glu-38 provides a ligand contact to Mg(2+). Residue His-153 participates in Mg(2+) binding.

It belongs to the DHBP synthase family. Homodimer. It depends on Mg(2+) as a cofactor. Mn(2+) serves as cofactor.

The enzyme catalyses D-ribulose 5-phosphate = (2S)-2-hydroxy-3-oxobutyl phosphate + formate + H(+). It functions in the pathway cofactor biosynthesis; riboflavin biosynthesis; 2-hydroxy-3-oxobutyl phosphate from D-ribulose 5-phosphate: step 1/1. In terms of biological role, catalyzes the conversion of D-ribulose 5-phosphate to formate and 3,4-dihydroxy-2-butanone 4-phosphate. The protein is 3,4-dihydroxy-2-butanone 4-phosphate synthase of Hamiltonella defensa subsp. Acyrthosiphon pisum (strain 5AT).